Consider the following 206-residue polypeptide: Dephospho-CoA kinase (206 aa).

Residues 4 to 204 enclose the DPCK domain; that stretch reads IVGLTGGIGS…QFYLQQAENK (201 aa). 12–17 contacts ATP; that stretch reads GSGKTT.

Belongs to the CoaE family.

It is found in the cytoplasm. It carries out the reaction 3'-dephospho-CoA + ATP = ADP + CoA + H(+). It participates in cofactor biosynthesis; coenzyme A biosynthesis; CoA from (R)-pantothenate: step 5/5. Its function is as follows. Catalyzes the phosphorylation of the 3'-hydroxyl group of dephosphocoenzyme A to form coenzyme A. This is Dephospho-CoA kinase from Haemophilus influenzae (strain 86-028NP).